Reading from the N-terminus, the 551-residue chain is Protein PNS1 (551 aa).

The segment at M1–T72 is disordered. The Cytoplasmic portion of the chain corresponds to M1–D94. Residues Q8–Q19 show a composition bias toward low complexity. Positions P45–T63 are enriched in polar residues. A helical transmembrane segment spans residues I95 to A115. Residues I116–T147 lie on the Extracellular side of the membrane. The chain crosses the membrane as a helical span at residues V148–A168. Residues L169 to L177 lie on the Cytoplasmic side of the membrane. Residues E178–I198 traverse the membrane as a helical segment. Residues Q199–Y200 are Extracellular-facing. The chain crosses the membrane as a helical span at residues W201–M221. The Cytoplasmic segment spans residues R222–S244. The helical transmembrane segment at V245–F265 threads the bilayer. Residues T266–Q307 are Extracellular-facing. A helical transmembrane segment spans residues V308–Y328. At G329–S356 the chain is on the cytoplasmic side. A helical membrane pass occupies residues I357–F377. Over R378–D386 the chain is Extracellular. A helical membrane pass occupies residues M387–V407. Residues E408–T452 lie on the Cytoplasmic side of the membrane. The helical transmembrane segment at A453–L473 threads the bilayer. Over R474 to A488 the chain is Extracellular. A helical transmembrane segment spans residues P489–I509. The Cytoplasmic segment spans residues D510 to H551.

Belongs to the CTL (choline transporter-like) family.

The protein resides in the cell membrane. Functionally, probably involved in transport through the plasma membrane. The polypeptide is Protein PNS1 (PNS1) (Cryptococcus neoformans var. neoformans serotype D (strain B-3501A) (Filobasidiella neoformans)).